The following is a 37-amino-acid chain: Large ribosomal subunit protein bL36 (37 aa).

The protein belongs to the bacterial ribosomal protein bL36 family.

In Staphylococcus epidermidis (strain ATCC 35984 / DSM 28319 / BCRC 17069 / CCUG 31568 / BM 3577 / RP62A), this protein is Large ribosomal subunit protein bL36.